The sequence spans 359 residues: MKKYLALALIAPLLISCSTTKKGDTYNEAWVKDTNGFDILMGQFAHNIENIWGFKEVVIAGPKDYVKYTDQYQTRSHINFDDGTITIETIAGTEPAAHLRRAIIKTLLMGDDPSSVDLYSDVDDITISKEPFLYGQVVDNTGQPIRWEGRASNFADYLLKNRLQSRSNGLRIIYSVTINMVPNHLDKRAHKYLGMVRQASRKYGVDESLILAIMQTESSFNPYAVSRSDALGLMQVVQHTAGKDVFRSQGKSGTPSRSFLFDPASNIDTGTAYLAMLNNVYLDGIDNPTSRRYAVITAYNGGAGSVLRVFSNDKIQAANIINTMTPGDVYQTLTTRHPSAESRRYLYKVNTAQKSYRRR.

Residues 1-16 (MKKYLALALIAPLLIS) form the signal peptide. Cys17 is lipidated: N-palmitoyl cysteine. A lipid anchor (S-diacylglycerol cysteine) is attached at Cys17.

It belongs to the transglycosylase Slt family.

It is found in the cell outer membrane. The enzyme catalyses Exolytic cleavage of the (1-&gt;4)-beta-glycosidic linkage between N-acetylmuramic acid (MurNAc) and N-acetylglucosamine (GlcNAc) residues in peptidoglycan, from either the reducing or the non-reducing ends of the peptidoglycan chains, with concomitant formation of a 1,6-anhydrobond in the MurNAc residue.. Functionally, murein-degrading enzyme. May play a role in recycling of muropeptides during cell elongation and/or cell division. The polypeptide is Membrane-bound lytic murein transglycosylase C (Shigella sonnei (strain Ss046)).